Here is a 137-residue protein sequence, read N- to C-terminus: Large ribosomal subunit protein uL16 (137 aa).

The protein belongs to the universal ribosomal protein uL16 family. As to quaternary structure, part of the 50S ribosomal subunit.

Its function is as follows. Binds 23S rRNA and is also seen to make contacts with the A and possibly P site tRNAs. This chain is Large ribosomal subunit protein uL16, found in Mesoplasma florum (strain ATCC 33453 / NBRC 100688 / NCTC 11704 / L1) (Acholeplasma florum).